A 428-amino-acid polypeptide reads, in one-letter code: Immunoglobulin superfamily containing leucine-rich repeat protein (428 aa).

Residues 1–18 (MQELHLLWWALLLGLAQA) form the signal peptide. The LRRNT domain occupies 19–50 (CPEPCDCGEKYGFQIADCAYRDLESVPPGFPA). N-linked (GlcNAc...) asparagine glycosylation is present at N51. 5 LRR repeats span residues 51–72 (NVTT…AFRE), 75–96 (LLQS…ALAS), 99–122 (HLKS…HNLS), 123–144 (ALQL…AFRS), and 147–168 (ALRS…TFTP). The LRRCT domain occupies 180 to 231 (NPFDCTCGIVWLKTWALTTAVSIPEQDNIACTSPHVLKGTPLSRLPPLPCSA). The Ig-like domain occupies 232-343 (PSVQLSYQPS…GSAESSVDVA (112 aa)). A disulfide bond links C257 and C327. N-linked (GlcNAc...) asparagine glycosylation occurs at N309.

Expressed in various tissues including retina, heart, skeletal muscle, prostate, ovary, small intestine, thyroid, adrenal cortex, testis, stomach and spinal cord.

It is found in the secreted. The sequence is that of Immunoglobulin superfamily containing leucine-rich repeat protein (ISLR) from Homo sapiens (Human).